A 434-amino-acid chain; its full sequence is Probable transcription factor HMS1 (434 aa).

A bHLH domain is found at 266–341; it reads TGRVSHNIIE…TKSIEYICHL (76 aa). Residues 365–434 form a disordered region; the sequence is HLTEPSQPLS…DMDFNNAGDF (70 aa). Composition is skewed to polar residues over residues 368–382 and 402–423; these read EPSQPLSDNSSSEQV and PLHNIQYNIPHQNGLMSGTNNS.

Interacts with the G1/S-specific cyclin PCL1. Phosphorylated by the cyclin-CDK complex PCL1-PHO85.

It is found in the nucleus. Its function is as follows. Involved in exit from mitosis and pseudohyphal differentiation. This Saccharomyces cerevisiae (strain ATCC 204508 / S288c) (Baker's yeast) protein is Probable transcription factor HMS1 (HMS1).